The sequence spans 246 residues: NAD-dependent protein deacetylase (246 aa).

A Deacetylase sirtuin-type domain is found at 1–246 (MKKPDIQQLK…VIEEIVNSNS (246 aa)). The NAD(+) site is built by Ala-25, Phe-36, Arg-37, Gln-106, Ile-108, Asp-109, and His-124. Phe-36 lines the nicotinamide pocket. Residues Ile-108 and Asp-109 each coordinate nicotinamide. The active-site Proton acceptor is His-124. Zn(2+) is bound by residues Cys-132, Cys-135, Cys-152, and Cys-155. Residues Ser-193, Ser-194, Asn-216, and Asp-233 each coordinate NAD(+).

It belongs to the sirtuin family. Class U subfamily. Zn(2+) serves as cofactor.

The protein resides in the cytoplasm. The catalysed reaction is N(6)-acetyl-L-lysyl-[protein] + NAD(+) + H2O = 2''-O-acetyl-ADP-D-ribose + nicotinamide + L-lysyl-[protein]. In terms of biological role, NAD-dependent protein deacetylase which modulates the activities of several enzymes which are inactive in their acetylated form. This chain is NAD-dependent protein deacetylase, found in Staphylococcus epidermidis (strain ATCC 35984 / DSM 28319 / BCRC 17069 / CCUG 31568 / BM 3577 / RP62A).